The chain runs to 225 residues: MESVQTRLCASSNQFAPFKKRQLAVPVGSVNSLTHTITSTTVTSVIPKNYQEKRQKICHIISSLRNTHLNFNKIQSVHKKKLRHLQNLLRKKNEIIAELVRKLESAQKKTTHRNISKPAHWKYFGVVRCDNTIRTIIGNEKFVRRRLAELCTLYNAEYVFCQARADGDKDRQALASLLTAAFGSRVIVYENSRRFEFINPDEIASGKRLIIKHLQDESQSDINAY.

In terms of assembly, interacts with proteins IE0 and IE1. Interacts with protein FP25K. Interacts with host importin alpha-16. In terms of processing, palmitoylated.

The protein resides in the host nucleus inner membrane. It is found in the virion. The protein localises to the host cytoplasm. Its subcellular location is the host nucleus. Its function is as follows. Plays a role in the sorting of ODV envelope proteins to the host inner nuclear membrane. May facilitate the fusion and release of nucleocapsids into the cytoplasm. Modulates the expression levels of IE0 and IE1. In Lepidoptera (butterflies and moths), this protein is Protein E26 (DA26).